We begin with the raw amino-acid sequence, 448 residues long: Asparagine--tRNA ligase (448 aa).

Belongs to the class-II aminoacyl-tRNA synthetase family. In terms of assembly, homodimer.

Its subcellular location is the cytoplasm. The enzyme catalyses tRNA(Asn) + L-asparagine + ATP = L-asparaginyl-tRNA(Asn) + AMP + diphosphate + H(+). This Streptococcus sanguinis (strain SK36) protein is Asparagine--tRNA ligase.